The following is a 411-amino-acid chain: Arginine deiminase (411 aa).

The Amidino-cysteine intermediate role is filled by cysteine 401.

This sequence belongs to the arginine deiminase family.

It is found in the cytoplasm. It catalyses the reaction L-arginine + H2O = L-citrulline + NH4(+). Its pathway is amino-acid degradation; L-arginine degradation via ADI pathway; carbamoyl phosphate from L-arginine: step 1/2. The polypeptide is Arginine deiminase (Staphylococcus epidermidis (strain ATCC 35984 / DSM 28319 / BCRC 17069 / CCUG 31568 / BM 3577 / RP62A)).